We begin with the raw amino-acid sequence, 364 residues long: Heme A synthase (364 aa).

8 helical membrane-spanning segments follow: residues Ala25–Gly45, Phe111–Gly131, Trp139–Val159, Leu174–Gly194, Ala212–Leu232, Val270–Val290, Ser305–Leu325, and Val327–Val347. Heme is bound at residue His274. His335 contacts heme.

It belongs to the COX15/CtaA family. Type 2 subfamily. Interacts with CtaB. It depends on heme b as a cofactor.

The protein resides in the cell membrane. The catalysed reaction is Fe(II)-heme o + 2 A + H2O = Fe(II)-heme a + 2 AH2. Its pathway is porphyrin-containing compound metabolism; heme A biosynthesis; heme A from heme O: step 1/1. Its function is as follows. Catalyzes the conversion of heme O to heme A by two successive hydroxylations of the methyl group at C8. The first hydroxylation forms heme I, the second hydroxylation results in an unstable dihydroxymethyl group, which spontaneously dehydrates, resulting in the formyl group of heme A. The polypeptide is Heme A synthase (Allorhizobium ampelinum (strain ATCC BAA-846 / DSM 112012 / S4) (Agrobacterium vitis (strain S4))).